The following is a 429-amino-acid chain: Glutamyl-tRNA reductase (429 aa).

Substrate contacts are provided by residues 49 to 52, Ser107, 112 to 114, and Gln118; these read TCNR and EPQ. The Nucleophile role is filled by Cys50. 187-192 is a binding site for NADP(+); the sequence is GAGETI.

It belongs to the glutamyl-tRNA reductase family. As to quaternary structure, homodimer.

The enzyme catalyses (S)-4-amino-5-oxopentanoate + tRNA(Glu) + NADP(+) = L-glutamyl-tRNA(Glu) + NADPH + H(+). It participates in porphyrin-containing compound metabolism; protoporphyrin-IX biosynthesis; 5-aminolevulinate from L-glutamyl-tRNA(Glu): step 1/2. Catalyzes the NADPH-dependent reduction of glutamyl-tRNA(Glu) to glutamate 1-semialdehyde (GSA). The protein is Glutamyl-tRNA reductase of Pseudomonas fluorescens (strain SBW25).